We begin with the raw amino-acid sequence, 44 residues long: Photosystem I reaction center subunit IX (44 aa).

The helical transmembrane segment at 7–27 threads the bilayer; it reads YLSVAPVLSTLWFGALAGLLI.

The protein belongs to the PsaJ family.

Its subcellular location is the plastid. It is found in the chloroplast thylakoid membrane. Functionally, may help in the organization of the PsaE and PsaF subunits. In Oryza nivara (Indian wild rice), this protein is Photosystem I reaction center subunit IX.